Consider the following 72-residue polypeptide: Conotoxin Lt6.3 (72 aa).

The signal sequence occupies residues 1 to 22; that stretch reads MKLTSVVIVAVLFLAACQLTTS. Positions 23–46 are excised as a propeptide; that stretch reads DGSRGTWKDRAVRSITKVSMLRWP. 3 disulfide bridges follow: Cys47-Cys61, Cys54-Cys64, and Cys60-Cys71.

This sequence belongs to the conotoxin O1 superfamily. In terms of tissue distribution, expressed by the venom duct.

The protein resides in the secreted. This is Conotoxin Lt6.3 from Conus litteratus (Lettered cone).